The chain runs to 236 residues: Small ribosomal subunit protein uS2c (236 aa).

The protein belongs to the universal ribosomal protein uS2 family.

It localises to the plastid. The protein resides in the chloroplast. This chain is Small ribosomal subunit protein uS2c (rps2), found in Glycine max (Soybean).